Here is a 541-residue protein sequence, read N- to C-terminus: Chaperonin GroEL (541 aa).

ATP-binding positions include 29–32 (TLGP), 86–90 (DGTTT), Gly-413, 476–478 (NAA), and Asp-492.

It belongs to the chaperonin (HSP60) family. As to quaternary structure, forms a cylinder of 14 subunits composed of two heptameric rings stacked back-to-back. Interacts with the co-chaperonin GroES.

It localises to the cytoplasm. The catalysed reaction is ATP + H2O + a folded polypeptide = ADP + phosphate + an unfolded polypeptide.. Together with its co-chaperonin GroES, plays an essential role in assisting protein folding. The GroEL-GroES system forms a nano-cage that allows encapsulation of the non-native substrate proteins and provides a physical environment optimized to promote and accelerate protein folding. The chain is Chaperonin GroEL from Enterococcus faecalis (strain ATCC 700802 / V583).